A 291-amino-acid polypeptide reads, in one-letter code: Transmembrane O-methyltransferase (291 aa).

The chain crosses the membrane as a helical span at residues 31–51 (VGTMSPAIALAFLPLVVTLLV). Residues glutamate 137, 139 to 140 (GT), serine 145, glutamate 163, and serine 193 contribute to the S-adenosyl-L-methionine site.

This sequence belongs to the class I-like SAM-binding methyltransferase superfamily. Cation-dependent O-methyltransferase family. As to quaternary structure, interacts with LHFPL5, PCDH15, TMC1, TMC2 and TMIE. Interacts directly with TMC1. The interaction of TOMT with TMC1 and TMC2 is required for the transportation of TMC1/2 into the stereocilia of hair cells.

It is found in the membrane. Its subcellular location is the cytoplasm. The protein resides in the endoplasmic reticulum. It carries out the reaction a catechol + S-adenosyl-L-methionine = a guaiacol + S-adenosyl-L-homocysteine + H(+). Its function is as follows. Catalyzes the O-methylation, and thereby the inactivation, of catecholamine neurotransmitters and catechol hormones. Required for auditory function. Component of the cochlear hair cell's mechanotransduction (MET) machinery. Involved in the assembly of the asymmetric tip-link MET complex. Required for transportation of TMC1 and TMC2 proteins into the mechanically sensitive stereocilia of the hair cells. The function in MET is independent of the enzymatic activity. This is Transmembrane O-methyltransferase from Pan troglodytes (Chimpanzee).